The following is a 183-amino-acid chain: Shikimate kinase (183 aa).

18 to 23 contributes to the ATP binding site; the sequence is GVGKTT. Thr22 contributes to the Mg(2+) binding site. Substrate is bound by residues Asp40, Arg64, and Gly86. ATP is bound at residue Arg125. Position 143 (Arg143) interacts with substrate.

This sequence belongs to the shikimate kinase family. Monomer. Requires Mg(2+) as cofactor.

Its subcellular location is the cytoplasm. It carries out the reaction shikimate + ATP = 3-phosphoshikimate + ADP + H(+). It functions in the pathway metabolic intermediate biosynthesis; chorismate biosynthesis; chorismate from D-erythrose 4-phosphate and phosphoenolpyruvate: step 5/7. Catalyzes the specific phosphorylation of the 3-hydroxyl group of shikimic acid using ATP as a cosubstrate. This Oceanobacillus iheyensis (strain DSM 14371 / CIP 107618 / JCM 11309 / KCTC 3954 / HTE831) protein is Shikimate kinase.